The chain runs to 602 residues: Aspartate--tRNA(Asp/Asn) ligase (602 aa).

L-aspartate is bound at residue Glu175. The interval 199 to 202 is aspartate; sequence QIFK. Residue Arg221 coordinates L-aspartate. ATP contacts are provided by residues 221–223 and Gln230; that span reads RDE. His458 contributes to the L-aspartate binding site. Residue Glu492 participates in ATP binding. Arg499 contacts L-aspartate. 544-547 is a binding site for ATP; that stretch reads GLDR.

This sequence belongs to the class-II aminoacyl-tRNA synthetase family. Type 1 subfamily. Homodimer.

The protein resides in the cytoplasm. It carries out the reaction tRNA(Asx) + L-aspartate + ATP = L-aspartyl-tRNA(Asx) + AMP + diphosphate. In terms of biological role, aspartyl-tRNA synthetase with relaxed tRNA specificity since it is able to aspartylate not only its cognate tRNA(Asp) but also tRNA(Asn). Reaction proceeds in two steps: L-aspartate is first activated by ATP to form Asp-AMP and then transferred to the acceptor end of tRNA(Asp/Asn). This Cupriavidus metallidurans (strain ATCC 43123 / DSM 2839 / NBRC 102507 / CH34) (Ralstonia metallidurans) protein is Aspartate--tRNA(Asp/Asn) ligase.